Here is a 138-residue protein sequence, read N- to C-terminus: Basic phospholipase A2 BP-I (138 aa).

The signal sequence occupies residues 1 to 16; it reads MRTLWIMAVLLLGVDG. Disulfide bonds link C42-C132, C44-C60, C59-C112, C65-C138, C66-C105, C73-C98, and C91-C103. The Ca(2+) site is built by G45 and G47. H63 is an active-site residue. The active site involves D106.

The protein belongs to the phospholipase A2 family. Group II subfamily. K49 sub-subfamily. The cofactor is Ca(2+). As to expression, expressed by the venom gland.

Its subcellular location is the secreted. It carries out the reaction a 1,2-diacyl-sn-glycero-3-phosphocholine + H2O = a 1-acyl-sn-glycero-3-phosphocholine + a fatty acid + H(+). Snake venom phospholipase A2 (PLA2) that has strong myotoxic activity with a low phospholipase A2 activity. PLA2 catalyzes the calcium-dependent hydrolysis of the 2-acyl groups in 3-sn-phosphoglycerides. The protein is Basic phospholipase A2 BP-I of Protobothrops flavoviridis (Habu).